A 382-amino-acid chain; its full sequence is MKKLIILGSTGSIGRQTLDVVRSLKEEFEIVGLTGYNNVSLLSKQIKEFRPKVVAVKDEEKARKLRENLDEPIEVLTGKEGLKEIVKYEADMVVVAVEGIAGLIPTVEAIKLGKNIALANKEVLVTAGEIVMGLVKEKKIEFLPVDSEHSAILQCLKGNNKREVSNLILTASGGPFRGKKKKDLVNVTVEEALKHPNWKMGKKITIDSATLMNKGFEVIEARWLFDMPLDKIKVVIHPQSIIHSMVEYVDGSVIAQLSVPDMRIAIQYALNYPDRKYVEGVKFLDFYALGQLTFEEPDFETFKCLSLAYHAAECGGTMTAVLNAADEVAVSLFLQNKINFLEIAEIIEEALENHKNIQNPTLDDIISVDLETRERIMRKYLR.

Positions 10, 11, 12, 13, 38, and 120 each coordinate NADPH. Residue Lys-121 coordinates 1-deoxy-D-xylulose 5-phosphate. Glu-122 provides a ligand contact to NADPH. A Mn(2+)-binding site is contributed by Asp-146. The 1-deoxy-D-xylulose 5-phosphate site is built by Ser-147, Glu-148, Ser-172, and His-195. Glu-148 contributes to the Mn(2+) binding site. An NADPH-binding site is contributed by Gly-201. 1-deoxy-D-xylulose 5-phosphate contacts are provided by Ser-208, Asn-213, Lys-214, and Glu-217. Glu-217 lines the Mn(2+) pocket.

Belongs to the DXR family. Requires Mg(2+) as cofactor. The cofactor is Mn(2+).

The catalysed reaction is 2-C-methyl-D-erythritol 4-phosphate + NADP(+) = 1-deoxy-D-xylulose 5-phosphate + NADPH + H(+). The protein operates within isoprenoid biosynthesis; isopentenyl diphosphate biosynthesis via DXP pathway; isopentenyl diphosphate from 1-deoxy-D-xylulose 5-phosphate: step 1/6. In terms of biological role, catalyzes the NADPH-dependent rearrangement and reduction of 1-deoxy-D-xylulose-5-phosphate (DXP) to 2-C-methyl-D-erythritol 4-phosphate (MEP). This chain is 1-deoxy-D-xylulose 5-phosphate reductoisomerase, found in Caldanaerobacter subterraneus subsp. tengcongensis (strain DSM 15242 / JCM 11007 / NBRC 100824 / MB4) (Thermoanaerobacter tengcongensis).